The primary structure comprises 311 residues: Dof zinc finger protein DOF1.4 (311 aa).

Over residues 1-12 the composition is skewed to polar residues; sequence MQSKNMIVASSH. Positions 1-29 are disordered; it reads MQSKNMIVASSHQQQQQQQPQQPQPQLKC. A compositionally biased stretch (low complexity) spans 13–26; it reads QQQQQQQPQQPQPQ. The Dof-type zinc finger occupies 27–81; sequence LKCPRCDSSNTKFCYYNNYSLSQPRHFCKACKRYWTRGGTLRNVPVGGSYRKNKR. Zn(2+)-binding residues include Cys-29, Cys-32, Cys-54, and Cys-57. Residues 72–110 form a disordered region; it reads VGGSYRKNKRVKRPSTATTTTASTVSTTNSSSPNNPHQI. Low complexity predominate over residues 85 to 107; it reads PSTATTTTASTVSTTNSSSPNNP.

The protein resides in the nucleus. Transcription factor that binds specifically to a 5'-AA[AG]G-3' consensus core sequence. The polypeptide is Dof zinc finger protein DOF1.4 (DOF1.4) (Arabidopsis thaliana (Mouse-ear cress)).